The sequence spans 660 residues: Secretin PulD (660 aa).

An N-terminal signal peptide occupies residues 1–27; the sequence is MIIANVIRSFSLTLLIFAALLFRPAAA. The interval 28–124 is N0; the sequence is EEFSASFKGT…VASDAAPGIG (97 aa). The segment at 126–190 is N1; the sequence is EVVTRVVPLT…TIVERVDNAG (65 aa). Positions 191–264 are N2; the sequence is DRSVVTVPLS…MIKQLDRQQA (74 aa). Positions 267-341 are N3; sequence GNTKVIYLKY…DLERVIAQLD (75 aa). A secretin region spans residues 346 to 596; the sequence is QVLVEAIIAE…LFIRPTVIRD (251 aa). The tract at residues 598–660 is s domain; the sequence is DEYRQASSGQ…IDAFNLGGNL (63 aa).

This sequence belongs to the bacterial secretin family. GSP D subfamily. As to quaternary structure, forms a cylindrical channel with 15 subunits.

The protein resides in the cell outer membrane. Its function is as follows. Involved in a type II secretion system (T2SS, formerly general secretion pathway, GSP) for the export of proteins. Required for the translocation of pullulanase. This subunit forms the outer membrane channel. The polypeptide is Secretin PulD (pulD) (Klebsiella pneumoniae).